Reading from the N-terminus, the 314-residue chain is UPF0761 membrane protein VIBHAR_00593 (314 aa).

Helical transmembrane passes span Tyr-41–Leu-61, Met-104–Asp-124, Phe-143–Val-163, Phe-185–Val-205, Ile-217–Ile-237, and Ala-249–Ile-269.

This sequence belongs to the UPF0761 family.

Its subcellular location is the cell inner membrane. In Vibrio campbellii (strain ATCC BAA-1116), this protein is UPF0761 membrane protein VIBHAR_00593.